A 290-amino-acid chain; its full sequence is GTPase Era (290 aa).

Residues Lys-2 to Asn-168 enclose the Era-type G domain. A G1 region spans residues Gly-10–Ser-17. Gly-10 to Ser-17 contacts GTP. Residues Gln-36 to Asp-40 are G2. Residues Asp-57–Gly-60 form a G3 region. GTP contacts are provided by residues Asp-57 to Ile-61 and Ser-118 to Asp-121. Residues Ser-118 to Asp-121 are G4. The tract at residues Val-147–Asn-149 is G5. The KH type-2 domain maps to Leu-199–Asn-275.

The protein belongs to the TRAFAC class TrmE-Era-EngA-EngB-Septin-like GTPase superfamily. Era GTPase family. In terms of assembly, monomer.

The protein resides in the cytoplasm. It localises to the cell membrane. Functionally, an essential GTPase that binds both GDP and GTP, with rapid nucleotide exchange. Plays a role in 16S rRNA processing and 30S ribosomal subunit biogenesis and possibly also in cell cycle regulation and energy metabolism. The polypeptide is GTPase Era (Mycoplasmopsis agalactiae (strain NCTC 10123 / CIP 59.7 / PG2) (Mycoplasma agalactiae)).